Reading from the N-terminus, the 148-residue chain is NADPH-dependent 7-cyano-7-deazaguanine reductase (148 aa).

Cys-50 (thioimide intermediate) is an active-site residue. Asp-57 acts as the Proton donor in catalysis. Residues Val-72–Ser-74 and His-91–Glu-92 contribute to the substrate site.

The protein belongs to the GTP cyclohydrolase I family. QueF type 1 subfamily.

The protein resides in the cytoplasm. The enzyme catalyses 7-aminomethyl-7-carbaguanine + 2 NADP(+) = 7-cyano-7-deazaguanine + 2 NADPH + 3 H(+). It functions in the pathway tRNA modification; tRNA-queuosine biosynthesis. Functionally, catalyzes the NADPH-dependent reduction of 7-cyano-7-deazaguanine (preQ0) to 7-aminomethyl-7-deazaguanine (preQ1). This chain is NADPH-dependent 7-cyano-7-deazaguanine reductase, found in Helicobacter acinonychis (strain Sheeba).